Consider the following 1004-residue polypeptide: Receptor-type tyrosine-protein phosphatase N2 (1004 aa).

A signal peptide spans 1-27; sequence MGLPLPLLLLLLLPPPLPRALPAPASA. The tract at residues 1–409 is involved in localization to secretory granules; interaction with CPE; it reads MGLPLPLLLL…PEAPLLEKSS (409 aa). Topologically, residues 28-603 are extracellular; sequence RGRQLPGRLG…HPEEQEDSTK (576 aa). Arg259 is modified (omega-N-methylarginine). 3 disordered regions span residues 274–294, 333–360, and 393–459; these read APALSQRWPLPPGDSKDSLSM, QSDPVEGSQESHGRGAEGQLREQADAPE, and DHGS…WRLE. The residue at position 340 (Ser340) is a Phosphoserine. Basic and acidic residues-rich tracts occupy residues 341-356 and 407-418; these read QESHGRGAEGQLREQA and KSSRAEMKKSEQ. Positions 419-430 are enriched in acidic residues; it reads PEEVLSSEEETA. Residues Ser424 and Ser425 each carry the phosphoserine modification. The segment covering 431–450 has biased composition (basic and acidic residues); the sequence is GVEHVKSRTYSKDLLERKPN. An N-linked (GlcNAc...) asparagine glycan is attached at Asn553. A helical membrane pass occupies residues 604-624; it reads FIVLTFLSIACILAVLLASSL. At 625-1004 the chain is on the cytoplasmic side; the sequence is AYCLRHNSHY…VNAILKALPQ (380 aa). A Tyrosine-based internalization motif motif is present at residues 655–664; that stretch reads YQELCRQRMA. The disordered stretch occupies residues 665–710; that stretch reads VRPQDHSEGPHTSRINSVSSQLSDGPMPSPSARSSTSSWSEEPAQS. Residues 677–687 are compositionally biased toward polar residues; that stretch reads SRINSVSSQLS. Ser681 carries the phosphoserine; by PKA modification. A Phosphoserine modification is found at Ser687. Residues 694–710 are compositionally biased toward low complexity; that stretch reads PSARSSTSSWSEEPAQS. Thr700 bears the Phosphothreonine; by PKA mark. Positions 734 to 994 constitute a Tyrosine-protein phosphatase domain; that stretch reads LEKEWEALCA…EFALTAVAEE (261 aa). Residues Asp902 and 934–940 contribute to the substrate site; that span reads CSDGAGR. The active-site Phosphocysteine intermediate is the Cys934. Lys959 bears the N6-acetyllysine mark. A substrate-binding site is contributed by Gln979. Positions 993-999 match the Leucine-based sorting signal motif; the sequence is EEVNAIL.

It belongs to the protein-tyrosine phosphatase family. Receptor class 8 subfamily. Self-associates. Interacts (via cytoplasmic domain) with PTPRN (via cytoplasmic domain). Interacts (precursor form) with CPE. Interacts with HAP1. Interacts with AP2A1 or AP2A2 and AP1G1; indicative for an association with adaptor protein complex 2 (AP-2) and adaptor protein complex 1 (AP-1). Interacts with AP2M1; indicative for an association with adaptor protein complex 2 (AP-2). Interacts with MYO5A. In terms of processing, subject to proteolytic cleavage at multiple sites.

It is found in the cytoplasmic vesicle. Its subcellular location is the secretory vesicle membrane. The protein localises to the secretory vesicle. The protein resides in the synaptic vesicle membrane. The enzyme catalyses O-phospho-L-tyrosyl-[protein] + H2O = L-tyrosyl-[protein] + phosphate. In terms of biological role, plays a role in vesicle-mediated secretory processes. Required for normal accumulation of secretory vesicles in hippocampus, pituitary and pancreatic islets. Required for the accumulation of normal levels of insulin-containing vesicles and preventing their degradation. Plays a role in insulin secretion in response to glucose stimuli. Required for normal accumulation of the neurotransmitters norepinephrine, dopamine and serotonin in the brain. In females, but not in males, required for normal accumulation and secretion of pituitary hormones, such as luteinizing hormone (LH) and follicle-stimulating hormone (FSH). Required to maintain normal levels of renin expression and renin release. May regulate catalytic active protein-tyrosine phosphatases such as PTPRA through dimerization. Has phosphatidylinositol phosphatase activity; the PIPase activity is involved in its ability to regulate insulin secretion. Can dephosphorylate phosphatidylinositol 4,5-biphosphate, phosphatidylinositol 5-phosphate and phosphatidylinositol 3-phosphate. Regulates PI(4,5)P2 level in the plasma membrane and localization of cofilin at the plasma membrane and thus is indirectly involved in regulation of actin dynamics related to cell migration and metastasis; upon hydrolysis of PI(4,5)P2 cofilin is released from the plasma membrane and acts in the cytoplasm in severing F-actin filaments. The polypeptide is Receptor-type tyrosine-protein phosphatase N2 (Ptprn2) (Rattus norvegicus (Rat)).